A 347-amino-acid chain; its full sequence is GMP reductase (347 aa).

108–131 (AEFEKVKKIMALSEEFVFICIDIA) contacts NADP(+). Positions 181 and 183 each coordinate K(+). The active-site Thioimidate intermediate is the Cys186. Residue 216 to 239 (IIGDGGCSCAGDVSKAFGGGADFV) coordinates NADP(+).

The protein belongs to the IMPDH/GMPR family. GuaC type 1 subfamily. As to quaternary structure, homotetramer.

It catalyses the reaction IMP + NH4(+) + NADP(+) = GMP + NADPH + 2 H(+). Catalyzes the irreversible NADPH-dependent deamination of GMP to IMP. It functions in the conversion of nucleobase, nucleoside and nucleotide derivatives of G to A nucleotides, and in maintaining the intracellular balance of A and G nucleotides. The polypeptide is GMP reductase (Vibrio atlanticus (strain LGP32) (Vibrio splendidus (strain Mel32))).